The chain runs to 1488 residues: Chromosome partition protein MukB (1488 aa).

34–41 (GGNGAGKS) serves as a coordination point for ATP. Coiled-coil stretches lie at residues 326-418 (LEAD…QYNQ), 444-472 (LDTF…QTAH), and 509-602 (RHLA…QRAP). A flexible hinge region spans residues 666-783 (PGGAEDQRLN…SLPIFGRAAR (118 aa)). Coiled-coil stretches lie at residues 835-923 (EAEI…AKLE), 977-1116 (EMLS…AKAG), and 1209-1265 (VEAI…LQSV). The disordered stretch occupies residues 1049 to 1074 (ADSGAEERARQRRDELHAQLSNNRSR). Basic and acidic residues predominate over residues 1051 to 1065 (SGAEERARQRRDELH).

This sequence belongs to the SMC family. MukB subfamily. In terms of assembly, homodimerization via its hinge domain. Binds to DNA via its C-terminal region. Interacts, and probably forms a ternary complex, with MukE and MukF via its C-terminal region. The complex formation is stimulated by calcium or magnesium. Interacts with tubulin-related protein FtsZ.

The protein resides in the cytoplasm. It is found in the nucleoid. Its function is as follows. Plays a central role in chromosome condensation, segregation and cell cycle progression. Functions as a homodimer, which is essential for chromosome partition. Involved in negative DNA supercoiling in vivo, and by this means organize and compact chromosomes. May achieve or facilitate chromosome segregation by condensation DNA from both sides of a centrally located replisome during cell division. This is Chromosome partition protein MukB from Salmonella typhi.